The following is a 997-amino-acid chain: MDLIRKNYAELVQRMGRTIAVQITNDLFTRNILSMGEMEEILSCKVAQDLTRELLNVILKKGTESCTRLLQSLENQDPFFYEDLIGQRVQSGVTEEDLENLADHLKRLYQYPFFKKFNPLGEDTDIDIIFDLDRTFTDPLLWRKGTLNRREKQLTLSEMLEQLESPCVIEGEAGKGKTTILKRIAMLWASEKCRALADFKLVFFVTLRGASEGLYETLSDQLFPITYSWNKKEFLNKIWHLGRKVLFLLDGYDEFQSESCTEIEELIKNNPKFNSTVIVSTRTETIGKLRRCGALIAETSDFSLDNAKQLIANVLEEDEANGLLFQLEESSFMQNLMKTPLFVVIACALRMGESDFQMNTQTTLFSTLYDLMVEKKKYKIRHLSANILAANIRKFGDLALDGLFEQRFDFNEKHLSKIKEEVLLNIGLLNKYTAQRRKAVYRYFHTTFQEYIAGRRLSQLLSSEDNSDVTKGEDFLNKIVSVFDITTKYKNLLLYTCGSSKVATQKVVKHVAEVHKHDKNNYSTELVEFGLNLFFESSTKKELSQDFETLFSEKCLYINSHNISSHHIEFFLYLPNCLSALQLIKLDLSGTFATVPSESTMDRDSKSAQSSVCDNYIPEKAVKLFFDWNQSIQTLEVTLRDFHQLNKKDIKYLGKICCSADSLRLNIKRSSGITGSLVGVLESCKNIQDLNVDSTKLSIEDERRIVQMTEMKTLSILNLHSEHLQGGLLEGLCNLVGLEKLVFHNIKIDKNDAKTLAEGILSLKKLKRLSISHISNIGDGMESIAESISLCCHELKELKLIDCCLSAKALRSLGQSLYSLSHIEILDLSGNYLLEEGKESVEELAANLTHLDAIRTLMLPGGTDVKFCLEAVLPTLRRIPTLSELAFKRWNLTNDDLMTLASYINSGFENLSFLDLSDNCAQSAGWLSLTAILQYLPNLTYVNFSTEDLFTPDPDLVRKLVRAISALPLLHTMELNNWQLDDFDLAQIKKAKNMIHR.

The CARD domain maps to 1-88 (MDLIRKNYAE…FFYEDLIGQR (88 aa)). The segment at 95-300 (EEDLENLADH…RCGALIAETS (206 aa)) is nucleotide-binding domain (NBD). One can recognise an NACHT domain in the interval 165 to 478 (SPCVIEGEAG…VTKGEDFLNK (314 aa)). 171–178 (GEAGKGKT) contributes to the ATP binding site. The tract at residues 358-465 (MNTQTTLFST…RLSQLLSSED (108 aa)) is winged-helix domain (WHD). 12 LRR repeats span residues 550–570 (LFSEKCLYINSHNISSHHIEF), 629–652 (NQSIQTLEVTLRDFHQLNKKDIKY), 708–731 (MTEMKTLSILNLHSEHLQGGLLEG), 735–758 (LVGLEKLVFHNIKIDKNDAKTLAE), 760–785 (ILSLKKLKRLSISHISNIGDGMESIA), 797–820 (ELKLIDCCLSAKALRSLGQSLYSL), 821–843 (SHIEILDLSGNYLLEEGKESVEE), 851–875 (LDAIRTLMLPGGTDVKFCLEAVLPT), 884–905 (ELAFKRWNLTNDDLMTLASYIN), 908–935 (FENLSFLDLSDNCAQSAGWLSLTAILQY), 937–958 (PNLTYVNFSTEDLFTPDPDLVR), and 972–994 (TMELNNWQLDDFDLAQIKKAKNM).

The protein resides in the cytoplasm. It is found in the cytosol. Functionally, key component of inflammasomes that indirectly senses specific proteins from pathogenic bacteria and fungi and responds by assembling an inflammasome complex that promotes caspase-1 activation, cytokine production and macrophage pyroptosis. This is NLR family CARD domain-containing protein 4 (nlrc4) from Xenopus tropicalis (Western clawed frog).